The sequence spans 86 residues: BolA-like protein 2 (86 aa).

Residue Met1 is modified to N-acetylmethionine.

This sequence belongs to the BolA/IbaG family. Interacts with GLRX3; forms a heterotrimeric complex composed by two BOLA2 molecules and one GLRX3 molecule; linked by [2Fe-2S] clusters.

The protein resides in the cytoplasm. It localises to the nucleus. Functionally, acts as a cytosolic iron-sulfur (Fe-S) cluster assembly factor that facilitates [2Fe-2S] cluster insertion into a subset of cytosolic proteins. Acts together with the monothiol glutaredoxin GLRX3. This chain is BolA-like protein 2 (BOLA2), found in Homo sapiens (Human).